A 389-amino-acid chain; its full sequence is ATP-dependent (S)-NAD(P)H-hydrate dehydratase (389 aa).

A YjeF C-terminal domain is found at 53–389 (TLQLVRNIIP…RGGGRLPQAL (337 aa)). Position 85 is a phosphotyrosine (Y85). (6S)-NADPHX is bound by residues E153 and 205-211 (NHMEFSR). ATP is bound by residues 245-249 (KGERD) and 264-273 (GSSRRCGGQG). D274 contacts (6S)-NADPHX. Disordered stretches follow at residues 316–350 (KTRA…PGGC) and 369–389 (RSLH…PQAL).

The protein belongs to the NnrD/CARKD family. It depends on Mg(2+) as a cofactor.

It localises to the mitochondrion. It carries out the reaction (6S)-NADHX + ATP = ADP + phosphate + NADH + H(+). The enzyme catalyses (6S)-NADPHX + ATP = ADP + phosphate + NADPH + H(+). Functionally, catalyzes the dehydration of the S-form of NAD(P)HX at the expense of ATP, which is converted to ADP. Together with NAD(P)HX epimerase, which catalyzes the epimerization of the S- and R-forms, the enzyme allows the repair of both epimers of NAD(P)HX, a damaged form of NAD(P)H that is a result of enzymatic or heat-dependent hydration. This Macaca mulatta (Rhesus macaque) protein is ATP-dependent (S)-NAD(P)H-hydrate dehydratase.